The chain runs to 432 residues: Adenylosuccinate synthetase (432 aa).

GTP contacts are provided by residues 13 to 19 (GDEGKGK) and 41 to 43 (GHT). The Proton acceptor role is filled by aspartate 14. The Mg(2+) site is built by aspartate 14 and glycine 41. IMP is bound by residues 14 to 17 (DEGK), 39 to 42 (NAGH), threonine 130, arginine 144, glutamine 225, threonine 240, and arginine 304. Histidine 42 functions as the Proton donor in the catalytic mechanism. 300–306 (ATTGRSR) contacts substrate. Residues arginine 306, 332-334 (KLD), and 415-417 (STG) contribute to the GTP site.

Belongs to the adenylosuccinate synthetase family. In terms of assembly, homodimer. It depends on Mg(2+) as a cofactor.

Its subcellular location is the cytoplasm. It catalyses the reaction IMP + L-aspartate + GTP = N(6)-(1,2-dicarboxyethyl)-AMP + GDP + phosphate + 2 H(+). Its pathway is purine metabolism; AMP biosynthesis via de novo pathway; AMP from IMP: step 1/2. Its function is as follows. Plays an important role in the de novo pathway of purine nucleotide biosynthesis. Catalyzes the first committed step in the biosynthesis of AMP from IMP. The polypeptide is Adenylosuccinate synthetase (Marinomonas sp. (strain MWYL1)).